The sequence spans 304 residues: Probable solute-binding protein AdeT1 (304 aa).

This sequence belongs to the bacterial solute-binding protein 7 family.

Its function is as follows. Mediates antimicrobial resistance via active efflux. Contributes to resistance to antibiotics such as chloramphenicol, erythromycin and novobiocin. May be part of a tripartite ATP-independent periplasmic (TRAP) transport system. This chain is Probable solute-binding protein AdeT1, found in Acinetobacter baumannii.